The primary structure comprises 246 residues: 2-aminoethylphosphonate cytidylyltransferase (246 aa).

CMP-(2-aminoethyl)phosphonate-binding residues include Ala19, Gly20, Lys34, Ser97, Glu114, and Ala115. 2 residues coordinate Mg(2+): Asp116 and Asp145. 3 residues coordinate CMP-(2-aminoethyl)phosphonate: Asp145, Lys161, and Asp202. Residues Glu226 and Asp228 each contribute to the Mg(2+) site.

Belongs to the LicC/PntC cytidylyltransferase family. In terms of assembly, monomer. The cofactor is Mg(2+).

It carries out the reaction (2-aminoethyl)phosphonate + CTP = CMP-(2-aminoethyl)phosphonate + diphosphate. Its pathway is phosphorus metabolism; phosphonate biosynthesis. Cytidylyltransferase involved in the biosynthesis of cell-surface phosphonates. Catalyzes the activation of 2-aminoethylphosphonate (AEP) to CMP-2-aminoethylphosphonate (CMP-AEP). Can also use phosphocholine, with much lower efficiency. Exhibits strong activity towards CTP, limited activity towards ATP and no activity with GTP. The chain is 2-aminoethylphosphonate cytidylyltransferase from Lancefieldella rimae (strain ATCC 49626 / DSM 7090 / CCUG 31168 / NBRC 15546 / VPI D140H-11A) (Atopobium rimae).